The chain runs to 1376 residues: Protein FAM135B (1376 aa).

Residues 431 to 442 (NEDECEFSEESP) show a composition bias toward acidic residues. A disordered region spans residues 431-489 (NEDECEFSEESPSENTHVGSKPHSIQSTTVHENASFEKPNVGTKAQEDCSTEGPEQGFD). Residues 443–462 (SENTHVGSKPHSIQSTTVHE) show a composition bias toward polar residues.

Belongs to the FAM135 family.

This Xenopus laevis (African clawed frog) protein is Protein FAM135B (fam135b).